Reading from the N-terminus, the 499-residue chain is MSTKKHTKTHSTYAFESNTNSVAASQMRNALNKLADSSKLDDAARAKFENELDSFFTLFRRYLVEKSSRTTLEWDKIKSPNPDEVVKYEIISQQPENVSNLSKLAVLKLNGGLGTSMGCVGPKSVIEVREGNTFLDLSVRQIEYLNRQYDSDVPLLLMNSFNTDKDTEHLIKKYSANRIRIRSFNQSRFPRVYKDSLLPVPTEYDSPLDAWYPPGHGDLFESLHVSGELDALIAQGREILFVSNGDNLGATVDLKILNHMIETGAEYIMELTDKTRADVKGGTLISYDGQVRLLEVAQVPKEHIDEFKNIRKFTNFNTNNLWINLKAVKRLIESSNLEMEIIPNQKTITRDGHEINVLQLETACGAAIRHFDGAHGVVVPRSRFLPVKTCSDLLLVKSDLFRLEHGSLKLDPSRFGPNPLIKLGSHFKKVSGFNARIPHIPKIVELDHLTITGNVFLGKDVTLRGTVIIVCSDGHKIDIPNGSILENVVVTGNLQILEH.

S2 bears the N-acetylserine mark. A Phosphoserine modification is found at S17. T19 carries the post-translational modification Phosphothreonine. 2 positions are modified to phosphoserine: S21 and S79. UTP contacts are provided by residues 109 to 112 (LNGG), K123, Q186, and G215. 111–112 (GG) serves as a coordination point for substrate. Mg(2+) is bound at residue K123. Substrate-binding positions include H216 and 244–246 (NGD). D246 contacts UTP. Mg(2+) is bound at residue D246. R369 carries the post-translational modification Omega-N-methylarginine. A UTP-binding site is contributed by K388. K388 is a catalytic residue. Positions 448-499 (HLTITGNVFLGKDVTLRGTVIIVCSDGHKIDIPNGSILENVVVTGNLQILEH) are oligomerization.

Belongs to the UDPGP type 1 family. In terms of assembly, homooctamer.

It catalyses the reaction alpha-D-glucose 1-phosphate + UTP + H(+) = UDP-alpha-D-glucose + diphosphate. Its function is as follows. Plays a central role as a glucosyl donor in cellular metabolic pathways. The protein is UTP--glucose-1-phosphate uridylyltransferase of Saccharomyces cerevisiae (strain ATCC 204508 / S288c) (Baker's yeast).